The sequence spans 480 residues: Cysteine--tRNA ligase (480 aa).

Cysteine 27 is a binding site for Zn(2+). The 'HIGH' region signature appears at 29 to 39; it reads PTVYNYAHIGN. Positions 221, 246, and 250 each coordinate Zn(2+). The short motif at 278 to 282 is the 'KMSKS' region element; sequence KMSKS. Lysine 281 serves as a coordination point for ATP.

This sequence belongs to the class-I aminoacyl-tRNA synthetase family. As to quaternary structure, monomer. It depends on Zn(2+) as a cofactor.

Its subcellular location is the cytoplasm. The catalysed reaction is tRNA(Cys) + L-cysteine + ATP = L-cysteinyl-tRNA(Cys) + AMP + diphosphate. This is Cysteine--tRNA ligase from Borrelia garinii subsp. bavariensis (strain ATCC BAA-2496 / DSM 23469 / PBi) (Borreliella bavariensis).